The chain runs to 88 residues: DNA-directed RNA polymerase subunit omega (88 aa).

Belongs to the RNA polymerase subunit omega family. In terms of assembly, the RNAP catalytic core consists of 2 alpha, 1 beta, 1 beta' and 1 omega subunit. When a sigma factor is associated with the core the holoenzyme is formed, which can initiate transcription.

The enzyme catalyses RNA(n) + a ribonucleoside 5'-triphosphate = RNA(n+1) + diphosphate. In terms of biological role, promotes RNA polymerase assembly. Latches the N- and C-terminal regions of the beta' subunit thereby facilitating its interaction with the beta and alpha subunits. This Kineococcus radiotolerans (strain ATCC BAA-149 / DSM 14245 / SRS30216) protein is DNA-directed RNA polymerase subunit omega.